We begin with the raw amino-acid sequence, 126 residues long: Glycine cleavage system H protein (126 aa).

A Lipoyl-binding domain is found at 19-100 (DGKIGITDHA…AHAAWMVKVE (82 aa)). Lys60 is modified (N6-lipoyllysine).

Belongs to the GcvH family. As to quaternary structure, the glycine cleavage system is composed of four proteins: P, T, L and H. (R)-lipoate serves as cofactor.

In terms of biological role, the glycine cleavage system catalyzes the degradation of glycine. The H protein shuttles the methylamine group of glycine from the P protein to the T protein. This is Glycine cleavage system H protein from Koribacter versatilis (strain Ellin345).